The primary structure comprises 348 residues: Acetylesterase (348 aa).

A signal peptide spans 1–16; sequence MRSILVIPSFVAVLNA. Asn64, Asn165, Asn218, Asn223, and Asn297 each carry an N-linked (GlcNAc...) asparagine glycan.

Belongs to the carbohydrate esterase CE16 family. Post-translationally, N-glycosylated.

The protein localises to the secreted. The enzyme catalyses an acetyl ester + H2O = an aliphatic alcohol + acetate + H(+). In terms of biological role, acetylesterase that acts as an exo-deacetylase. Shows activity towards naphtyl acetate, triacetin, as well as towards glucose- and xylose acetates. Liberates acetic acid from xylo-oligomers. The protein is Acetylesterase of Hypocrea jecorina (Trichoderma reesei).